Consider the following 534-residue polypeptide: Calcium-dependent protein kinase 29 (534 aa).

Positions 1–72 are disordered; the sequence is MGFCFSKFGK…STSSGSQIGP (72 aa). A lipid anchor (N-myristoyl glycine) is attached at Gly2. Positions 16 to 27 are enriched in low complexity; that stretch reads IPISSSSDSSPP. Over residues 49 to 63 the composition is skewed to pro residues; it reads NPQPKPKPAPPPPPS. The region spanning 85 to 343 is the Protein kinase domain; the sequence is YDLHKELGRG…AAEALEHPWM (259 aa). Residues 91–99 and Lys114 contribute to the ATP site; that span reads LGRGQFGIT. Catalysis depends on Asp209, which acts as the Proton acceptor. Ser249 carries the phosphoserine modification. Positions 348–378 are autoinhibitory domain; it reads ISDKPINSAVLVRMKQFRAMNKLKKLALKVI. 4 consecutive EF-hand domains span residues 385–420, 421–456, 457–492, and 493–527; these read EEIK…LGSK, LTES…RHRL, EKEE…YGMG, and DDAT…GTTD. Positions 398, 400, 402, 404, 409, 434, 436, 438, 440, 445, 470, 472, 474, 481, 505, 507, 509, 511, and 516 each coordinate Ca(2+).

This sequence belongs to the protein kinase superfamily. Ser/Thr protein kinase family. CDPK subfamily.

The protein localises to the membrane. The enzyme catalyses L-seryl-[protein] + ATP = O-phospho-L-seryl-[protein] + ADP + H(+). It catalyses the reaction L-threonyl-[protein] + ATP = O-phospho-L-threonyl-[protein] + ADP + H(+). With respect to regulation, activated by calcium. Autophosphorylation may play an important role in the regulation of the kinase activity. Its function is as follows. May play a role in signal transduction pathways that involve calcium as a second messenger. This chain is Calcium-dependent protein kinase 29 (CPK29), found in Arabidopsis thaliana (Mouse-ear cress).